The primary structure comprises 395 residues: Probable sugar efflux transporter (395 aa).

12 helical membrane-spanning segments follow: residues 13–33 (VVSL…PVAL), 48–68 (VGLI…PCML), 82–102 (IFIL…YWVL), 107–127 (IGVA…VVRL), 134–154 (AQAL…GLPL), 168–188 (FVLI…LLPV), 207–227 (PALL…FTAY), 244–264 (FTTI…MLFS), 272–292 (AGFL…LLPL), 297–317 (WSLS…SLGM), 331–351 (VAMA…ALLG), and 363–383 (IGYM…FTFV).

This sequence belongs to the major facilitator superfamily. SotB (TC 2.A.1.2) family.

It localises to the cell inner membrane. Its function is as follows. Involved in the efflux of sugars. The physiological role may be the reduction of the intracellular concentration of toxic sugars or sugar metabolites. This Pectobacterium atrosepticum (strain SCRI 1043 / ATCC BAA-672) (Erwinia carotovora subsp. atroseptica) protein is Probable sugar efflux transporter.